The following is a 105-amino-acid chain: MASEPNLRYPTEETGDRGPQGPPGPPGPQGPPGPQGPPGPQGPPGPQGPPGPQGPPGPQGPPGPPGPPGPSGLPGLFVTNLLLGIIILLLLIIVAILLVSKLVVN.

The Cytoplasmic segment spans residues 1-75 (MASEPNLRYP…GPPGPSGLPG (75 aa)). The segment at 1 to 75 (MASEPNLRYP…GPPGPSGLPG (75 aa)) is disordered. In terms of domain architecture, Collagen-like spans 15 to 74 (GDRGPQGPPGPPGPQGPPGPQGPPGPQGPPGPQGPPGPQGPPGPQGPPGPPGPPGPSGLP). A compositionally biased stretch (pro residues) spans 20-71 (QGPPGPPGPQGPPGPQGPPGPQGPPGPQGPPGPQGPPGPQGPPGPPGPPGPS). The helical transmembrane segment at 76–96 (LFVTNLLLGIIILLLLIIVAI) threads the bilayer. The Extracellular segment spans residues 97-105 (LLVSKLVVN).

As to quaternary structure, binds to host RAS and TRAF2.

The protein resides in the host membrane. Acts synergistically with Tip to stimulate NF-kappa-B activity and interleukin-2 gene expression by binding to host TRAF proteins. Activation of NF-kappa-B protects lymphocytes from apoptosis, thereby facilitating viral induced cell transformation. The protein is Saimiri transformation-associated protein of Saimiriine herpesvirus 2 (strain 484-77) (SaHV-2).